The chain runs to 338 residues: Fructose-1,6-bisphosphatase class 1 (338 aa).

Positions 91, 113, 115, and 116 each coordinate Mg(2+). Residues 116–119 (DGSS), N211, Y244, and K277 each bind substrate. E283 lines the Mg(2+) pocket.

Belongs to the FBPase class 1 family. Homotetramer. It depends on Mg(2+) as a cofactor.

It localises to the cytoplasm. The catalysed reaction is beta-D-fructose 1,6-bisphosphate + H2O = beta-D-fructose 6-phosphate + phosphate. The protein operates within carbohydrate biosynthesis; gluconeogenesis. The polypeptide is Fructose-1,6-bisphosphatase class 1 (Oleidesulfovibrio alaskensis (strain ATCC BAA-1058 / DSM 17464 / G20) (Desulfovibrio alaskensis)).